Reading from the N-terminus, the 363-residue chain is Probable endopolygalacturonase A (363 aa).

The first 20 residues, 1 to 20 (MQLLQSSVIAATVGAALVAA), serve as a signal peptide directing secretion. Residues 21-28 (APVELEAR) constitute a propeptide that is removed on maturation. Cysteine 31 and cysteine 46 are oxidised to a cystine. PbH1 repeat units lie at residues 158–187 (SDNLNITDVTIDNSAGTAEGHNTDAFDIGS), 188–209 (STYINIDGATVYNQDDCLAINS), 210–230 (GSHITFTNGYCDGGHGLSIGS), 239–260 (VEDVTISNSKVVNSQNGVRIKT), 268–290 (VSNVKFEDITLSGITKYGLVVEQ), and 302–347 (TNGI…SITG). Residue asparagine 162 is glycosylated (N-linked (GlcNAc...) asparagine). Catalysis depends on aspartate 202, which acts as the Proton donor. An intrachain disulfide couples cysteine 204 to cysteine 220. Histidine 224 is an active-site residue. Cystine bridges form between cysteine 330–cysteine 335 and cysteine 354–cysteine 363.

This sequence belongs to the glycosyl hydrolase 28 family.

The protein resides in the secreted. It carries out the reaction (1,4-alpha-D-galacturonosyl)n+m + H2O = (1,4-alpha-D-galacturonosyl)n + (1,4-alpha-D-galacturonosyl)m.. Its function is as follows. Involved in maceration and soft-rotting of plant tissue. Hydrolyzes the 1,4-alpha glycosidic bonds of de-esterified pectate in the smooth region of the plant cell wall. The protein is Probable endopolygalacturonase A (pgaA) of Aspergillus parasiticus.